A 388-amino-acid chain; its full sequence is Succinate--CoA ligase [ADP-forming] subunit beta (388 aa).

The 236-residue stretch at 9-244 folds into the ATP-grasp domain; it reads KSLFAEYGLP…PSQDDAREAH (236 aa). ATP is bound by residues Lys-46, 53 to 55, Glu-99, Thr-102, and Glu-107; that span reads GRG. Positions 199 and 213 each coordinate Mg(2+). Residues Asn-264 and 321-323 each bind substrate; that span reads GIV.

The protein belongs to the succinate/malate CoA ligase beta subunit family. As to quaternary structure, heterotetramer of two alpha and two beta subunits. Requires Mg(2+) as cofactor.

The enzyme catalyses succinate + ATP + CoA = succinyl-CoA + ADP + phosphate. The catalysed reaction is GTP + succinate + CoA = succinyl-CoA + GDP + phosphate. It functions in the pathway carbohydrate metabolism; tricarboxylic acid cycle; succinate from succinyl-CoA (ligase route): step 1/1. Succinyl-CoA synthetase functions in the citric acid cycle (TCA), coupling the hydrolysis of succinyl-CoA to the synthesis of either ATP or GTP and thus represents the only step of substrate-level phosphorylation in the TCA. The beta subunit provides nucleotide specificity of the enzyme and binds the substrate succinate, while the binding sites for coenzyme A and phosphate are found in the alpha subunit. This Shewanella oneidensis (strain ATCC 700550 / JCM 31522 / CIP 106686 / LMG 19005 / NCIMB 14063 / MR-1) protein is Succinate--CoA ligase [ADP-forming] subunit beta.